Here is a 419-residue protein sequence, read N- to C-terminus: UDP-N-acetylglucosamine 1-carboxyvinyltransferase (419 aa).

K22–N23 is a binding site for phosphoenolpyruvate. UDP-N-acetyl-alpha-D-glucosamine is bound at residue R93. C117 (proton donor) is an active-site residue. C117 bears the 2-(S-cysteinyl)pyruvic acid O-phosphothioketal mark. D306 and I328 together coordinate UDP-N-acetyl-alpha-D-glucosamine.

Belongs to the EPSP synthase family. MurA subfamily.

It is found in the cytoplasm. The enzyme catalyses phosphoenolpyruvate + UDP-N-acetyl-alpha-D-glucosamine = UDP-N-acetyl-3-O-(1-carboxyvinyl)-alpha-D-glucosamine + phosphate. It functions in the pathway cell wall biogenesis; peptidoglycan biosynthesis. Functionally, cell wall formation. Adds enolpyruvyl to UDP-N-acetylglucosamine. In Ruthia magnifica subsp. Calyptogena magnifica, this protein is UDP-N-acetylglucosamine 1-carboxyvinyltransferase.